Reading from the N-terminus, the 139-residue chain is MLFIKPADLREIVTFPLFSDLVQCGFPSPAADYVEQRIDLNQLLIQHPSATYFVKASGDSMIDGGISDGDLLIVDSAITASHGDIVIAAVDGEFTVKKLQLRPTVQLIPMNSAYSPITISSEDTLDVFGVVIHVVKAMR.

Active-site for autocatalytic cleavage activity residues include Ser60 and Lys97.

This sequence belongs to the peptidase S24 family.

Its function is as follows. Involved in UV protection and mutation. Essential for induced (or SOS) mutagenesis. May modify the DNA replication machinery to allow bypass synthesis across a damaged template. This Escherichia coli O157:H7 protein is Protein UmuD (umuD).